The following is a 147-amino-acid chain: Cyanate hydratase (147 aa).

Residues Arg88, Glu91, and Ser114 contribute to the active site.

The protein belongs to the cyanase family.

The catalysed reaction is cyanate + hydrogencarbonate + 3 H(+) = NH4(+) + 2 CO2. In terms of biological role, catalyzes the reaction of cyanate with bicarbonate to produce ammonia and carbon dioxide. This is Cyanate hydratase from Methylibium petroleiphilum (strain ATCC BAA-1232 / LMG 22953 / PM1).